A 649-amino-acid chain; its full sequence is Archaeal Lon protease (649 aa).

Over 1 to 114 the chain is Cytoplasmic; the sequence is MFSIKFKTTE…KLDFKAPSST (114 aa). 47–54 contacts ATP; the sequence is GDPGVGKS. A helical membrane pass occupies residues 115–135; it reads TLLLIMIGAILLSEYLLKYLP. At 136-138 the chain is on the extracellular side; that stretch reads QNY. The chain crosses the membrane as a helical span at residues 139-159; that stretch reads LLAAVTITALIVLIFGFVIIL. Residues 160 to 649 are Cytoplasmic-facing; it reads TSIMGASRAS…DNRGGAERFN (490 aa). The 184-residue stretch at 456–639 folds into the Lon proteolytic domain; that stretch reads EPKVGVIYGL…DEIVPLVFDL (184 aa). Residues Ser-550 and Lys-593 contribute to the active site.

The protein belongs to the peptidase S16 family. Archaeal LonB subfamily. In terms of assembly, homohexamer. Organized in a ring with a central cavity.

It is found in the cell membrane. ATP-dependent serine protease that mediates the selective degradation of mutant and abnormal proteins as well as certain short-lived regulatory proteins. Degrades polypeptides processively. The polypeptide is Archaeal Lon protease (Methanocaldococcus jannaschii (strain ATCC 43067 / DSM 2661 / JAL-1 / JCM 10045 / NBRC 100440) (Methanococcus jannaschii)).